The sequence spans 130 residues: Small ribosomal subunit protein uS11 (130 aa).

Belongs to the universal ribosomal protein uS11 family. Part of the 30S ribosomal subunit. Interacts with proteins S7 and S18. Binds to IF-3.

In terms of biological role, located on the platform of the 30S subunit, it bridges several disparate RNA helices of the 16S rRNA. Forms part of the Shine-Dalgarno cleft in the 70S ribosome. This chain is Small ribosomal subunit protein uS11, found in Teredinibacter turnerae (strain ATCC 39867 / T7901).